Consider the following 122-residue polypeptide: Large ribosomal subunit protein uL14 (122 aa).

Belongs to the universal ribosomal protein uL14 family. As to quaternary structure, part of the 50S ribosomal subunit. Forms a cluster with proteins L3 and L19. In the 70S ribosome, L14 and L19 interact and together make contacts with the 16S rRNA in bridges B5 and B8.

Its function is as follows. Binds to 23S rRNA. Forms part of two intersubunit bridges in the 70S ribosome. This is Large ribosomal subunit protein uL14 from Corynebacterium aurimucosum (strain ATCC 700975 / DSM 44827 / CIP 107346 / CN-1) (Corynebacterium nigricans).